The primary structure comprises 215 residues: MEKKVLLTGFDPFGGETVNPSWEAVKRLNGAAEGPASIVSEQVPTVFYKSLAVLREAIKKHQPDIIICVGQAGGRMQITPERVAINLNEARIPDNEGNQPVGEDISQGGPAAYWTGLPIKRIVEEIKKEGIPAAVSYTAGTFVCNHLFYGLMDEISRHHPHIRGGFIHIPYIPEQTLQKSAPSLSLDHITKALKIAAVTAAVHEDDIETGGGELH.

Catalysis depends on residues Glu-81, Cys-144, and His-168.

Belongs to the peptidase C15 family. In terms of assembly, homotetramer.

It localises to the cytoplasm. The catalysed reaction is Release of an N-terminal pyroglutamyl group from a polypeptide, the second amino acid generally not being Pro.. Its function is as follows. Removes 5-oxoproline from various penultimate amino acid residues except L-proline. The protein is Pyrrolidone-carboxylate peptidase (pcp) of Bacillus amyloliquefaciens (Bacillus velezensis).